The primary structure comprises 23 residues: Unknown protein NF016 from 2D-PAGE (23 aa).

The protein is Unknown protein NF016 from 2D-PAGE of Naegleria fowleri (Brain eating amoeba).